A 317-amino-acid chain; its full sequence is Transaldolase (317 aa).

Residue lysine 132 is the Schiff-base intermediate with substrate of the active site.

This sequence belongs to the transaldolase family. Type 1 subfamily. As to quaternary structure, homodimer.

The protein localises to the cytoplasm. The catalysed reaction is D-sedoheptulose 7-phosphate + D-glyceraldehyde 3-phosphate = D-erythrose 4-phosphate + beta-D-fructose 6-phosphate. It functions in the pathway carbohydrate degradation; pentose phosphate pathway; D-glyceraldehyde 3-phosphate and beta-D-fructose 6-phosphate from D-ribose 5-phosphate and D-xylulose 5-phosphate (non-oxidative stage): step 2/3. Functionally, transaldolase is important for the balance of metabolites in the pentose-phosphate pathway. This chain is Transaldolase, found in Actinobacillus succinogenes (strain ATCC 55618 / DSM 22257 / CCUG 43843 / 130Z).